The sequence spans 2641 residues: CCR4-NOT transcription complex subunit let-711 (2641 aa).

Residues 660-664 (LSELL) carry the LXXLL motif. Disordered regions lie at residues 771-887 (SGRS…QNAQ), 936-963 (TQRQNSNSGWHAAPAPQRPSGPPTPQQQ), 1197-1221 (EGGRHTPVGSAQAGSASSTPTPAAA), 1518-1565 (QSKI…SQGA), and 2034-2054 (GMNNAMNNGAGNAAHHHAGLQ). Low complexity-rich tracts occupy residues 774–795 (SSSVSSGGHVQQSSGSQPQQQQ), 802–839 (LPPSGVVPVQQQPQQPPSLQQQHSQQSLPTPPTTSQQQ), and 853–877 (PAQFAPQPMFPPQAQAQHQHQHMMG). Residues 951–960 (PQRPSGPPTP) show a composition bias toward pro residues. Low complexity predominate over residues 1205-1221 (GSAQAGSASSTPTPAAA). The span at 2034-2046 (GMNNAMNNGAGNA) shows a compositional bias: low complexity. The LXXLL motif lies at 2341 to 2345 (LRVLL). The segment at 2609-2641 (AQGSQPQAQPDGAPGPLGNNTGAANQQQNPNTN) is disordered.

This sequence belongs to the CNOT1 family. As to quaternary structure, component of the CCR4-NOT complex at least composed of ccf-1, ccr-4 and let-711, which is required for germ cell development in hermaphrodites. Within the complex interacts with ccf-1 and ccr-4; the interactions are direct. In terms of tissue distribution, highly expressed in the germline of hermaphrodites.

It localises to the nucleus. Scaffolding component of the CCR4-NOT complex which is one of the major cellular mRNA deadenylases and is linked to various cellular processes including bulk mRNA degradation, miRNA-mediated repression, translational repression during translational initiation and general transcription regulation. Positively regulates the accumulation of the CCR4-NOT complex component ccr-1. Within the complex promotes germ cell development and fertility in hermaphrodites. Additional complex functions may be a consequence of its influence on mRNA expression. Its scaffolding function implies its interaction with the catalytic complex module and diverse RNA-binding proteins mediating the complex recruitment to selected mRNA 3'UTRs. Mediates the recruitment of the CCR4-NOT complex to miRNA targets and to the RISC complex. Acts as a transcriptional repressor. Represses the ligand-dependent transcriptional activation by nuclear receptors. In embryos, plays a role in female pronucleus and mitotic spindle positioning during the first cleavage divisions after fertilization. This may partly be through negatively regulating the accumulation of zyg-9 at the centrosome. Negatively regulates the formation of long astral microtubules in developing embryos. Required for the stabilization and degradation of maternal mRNAs such as nos-2 in somatic blastomeres. This chain is CCR4-NOT transcription complex subunit let-711, found in Caenorhabditis elegans.